Here is a 264-residue protein sequence, read N- to C-terminus: Thymidylate synthase (264 aa).

DUMP is bound at residue Arg21. Position 51 (His51) interacts with (6R)-5,10-methylene-5,6,7,8-tetrahydrofolate. 126–127 (RR) lines the dUMP pocket. Cys146 (nucleophile) is an active-site residue. Residues 166–169 (RSCD), Asn177, and 207–209 (HLY) contribute to the dUMP site. (6R)-5,10-methylene-5,6,7,8-tetrahydrofolate is bound at residue Asp169. Ala263 is a (6R)-5,10-methylene-5,6,7,8-tetrahydrofolate binding site.

This sequence belongs to the thymidylate synthase family. Bacterial-type ThyA subfamily. As to quaternary structure, homodimer.

Its subcellular location is the cytoplasm. The enzyme catalyses dUMP + (6R)-5,10-methylene-5,6,7,8-tetrahydrofolate = 7,8-dihydrofolate + dTMP. It participates in pyrimidine metabolism; dTTP biosynthesis. Catalyzes the reductive methylation of 2'-deoxyuridine-5'-monophosphate (dUMP) to 2'-deoxythymidine-5'-monophosphate (dTMP) while utilizing 5,10-methylenetetrahydrofolate (mTHF) as the methyl donor and reductant in the reaction, yielding dihydrofolate (DHF) as a by-product. This enzymatic reaction provides an intracellular de novo source of dTMP, an essential precursor for DNA biosynthesis. The protein is Thymidylate synthase of Cronobacter sakazakii (strain ATCC BAA-894) (Enterobacter sakazakii).